The chain runs to 852 residues: Patatin-like phospholipase domain-containing protein CaO19.1504 (852 aa).

Over residues 41-52 (ATTDITTTPIND) the composition is skewed to low complexity. The disordered stretch occupies residues 41-184 (ATTDITTTPI…KKTTPTSSTS (144 aa)). Residues 75–95 (INGTVSDSSSITDEDIMNSSY) show a composition bias toward polar residues. A compositionally biased stretch (low complexity) spans 101 to 110 (SSTNLKSNST). Positions 113–122 (DDDDDDDDDD) are enriched in acidic residues. 2 stretches are compositionally biased toward low complexity: residues 129-142 (SGTT…SLSS) and 158-171 (GGSR…KGSS). Residues 207-227 (WPILIFVFSWIGILGIFYFMI) form a helical membrane-spanning segment. The region spanning 396-588 (LCLSGGACFA…RTDIPIEALN (193 aa)) is the PNPLA domain. The GXSXG signature appears at 427–431 (GTSGG). S429 acts as the Nucleophile in catalysis. D575 serves as the catalytic Proton acceptor. A disordered region spans residues 800-840 (KKLLDELDNEDEEEDEEEEEVDVDDDDDDDDDSLSDSFEIT). Residues 805-833 (ELDNEDEEEDEEEEEVDVDDDDDDDDDSL) are compositionally biased toward acidic residues.

Belongs to the PLPL family.

It is found in the membrane. In terms of biological role, probable lipid hydrolase. This is Patatin-like phospholipase domain-containing protein CaO19.1504 from Candida albicans (strain SC5314 / ATCC MYA-2876) (Yeast).